Reading from the N-terminus, the 445-residue chain is 3-phosphoshikimate 1-carboxyvinyltransferase (445 aa).

The interval 1 to 25 (MSGHGPAQPMTARRSGPLKGRAEIP) is disordered. Residues Lys-28, Ser-29, and Arg-33 each contribute to the 3-phosphoshikimate site. Position 28 (Lys-28) interacts with phosphoenolpyruvate. Gly-101 and Arg-129 together coordinate phosphoenolpyruvate. The 3-phosphoshikimate site is built by Ser-174, Gln-176, Asp-326, and Lys-353. Residue Gln-176 coordinates phosphoenolpyruvate. The Proton acceptor role is filled by Asp-326. Phosphoenolpyruvate is bound by residues Arg-357 and Arg-400.

It belongs to the EPSP synthase family. Monomer.

It localises to the cytoplasm. It catalyses the reaction 3-phosphoshikimate + phosphoenolpyruvate = 5-O-(1-carboxyvinyl)-3-phosphoshikimate + phosphate. Its pathway is metabolic intermediate biosynthesis; chorismate biosynthesis; chorismate from D-erythrose 4-phosphate and phosphoenolpyruvate: step 6/7. Functionally, catalyzes the transfer of the enolpyruvyl moiety of phosphoenolpyruvate (PEP) to the 5-hydroxyl of shikimate-3-phosphate (S3P) to produce enolpyruvyl shikimate-3-phosphate and inorganic phosphate. In Cereibacter sphaeroides (strain ATCC 17029 / ATH 2.4.9) (Rhodobacter sphaeroides), this protein is 3-phosphoshikimate 1-carboxyvinyltransferase.